The sequence spans 191 residues: Neuronal calcium sensor 1 (191 aa).

Gly2 carries N-myristoyl glycine lipidation. EF-hand domains lie at 24 to 59 (ESEI…FPFG), 60 to 95 (DPSK…TSRG), 96 to 131 (TVEE…IYRM), and 144 to 179 (TPEK…DPTI). 14 residues coordinate Ca(2+): Asp73, Asn75, Asp77, Glu84, Asp109, Asp111, Asp113, Tyr115, Glu120, Asp157, Asn159, Asp161, Gln163, and Glu168.

The protein belongs to the recoverin family.

Its subcellular location is the perikaryon. It localises to the cell projection. The protein resides in the growth cone. Neuronal calcium sensor, regulator of G protein-coupled receptor phosphorylation in a calcium dependent manner. Regulates neurite extension and branching by activity-dependent Ca(2+) influx in growth cones. This chain is Neuronal calcium sensor 1, found in Lymnaea stagnalis (Great pond snail).